We begin with the raw amino-acid sequence, 1755 residues long: Transposon Ty1-OR Gag-Pol polyprotein (1755 aa).

3 stretches are compositionally biased toward polar residues: residues 1-10 (MESQQLSNYP), 48-60 (TKAN…TPAS), and 127-152 (QSQF…GNTF). 3 disordered regions span residues 1-93 (MESQ…MMTQ), 126-173 (PQSQ…RPPP), and 352-421 (GSRN…SKST). The segment covering 153 to 165 (TDSSSADSDMTST) has biased composition (low complexity). The RNA-binding stretch occupies residues 299–401 (NNGIHINNKV…NSKSKTARAH (103 aa)). The span at 402–418 (NVSTSNNSPSTDNDSIS) shows a compositional bias: low complexity. The residue at position 416 (Ser416) is a Phosphoserine. Asp461 acts as the For protease activity; shared with dimeric partner in catalysis. The segment at 583–640 (NVHTSESTRKYPYPFIHRMLAHANAQTIRYSLKNNTITYFNESDVDWSSAIDYQCPDC) is integrase-type zinc finger-like. Residues 660 to 835 (NSYEPFQYLH…AGLDISTLLP (176 aa)) form the Integrase catalytic domain. Positions 671 and 736 each coordinate Mg(2+). Disordered regions lie at residues 956–1087 (SKAV…ETEK), 1092–1111 (RSPS…NIVP), and 1130–1187 (DLPL…DNET). Residues 960-969 (SPTDSTPPST) show a composition bias toward low complexity. Positions 1005–1015 (STPQISNIEST) are enriched in polar residues. A compositionally biased stretch (basic and acidic residues) spans 1038–1053 (ESSHASKSKDFRHSDS). Polar residues-rich tracts occupy residues 1054 to 1082 (YSEN…QISD) and 1101 to 1111 (PENNSSHNIVP). Residues 1178 to 1212 (KKRSLEDNETEIKVSRDTWNTKNMRSLEPPRSKKR) carry the Bipartite nuclear localization signal motif. In terms of domain architecture, Reverse transcriptase Ty1/copia-type spans 1338 to 1476 (NNYYITQLDI…DILGLEIKYQ (139 aa)). Asp1346, Asp1427, Asp1428, Asp1610, Glu1652, and Asp1685 together coordinate Mg(2+). The 143-residue stretch at 1610–1752 (DASYGNQPYY…IKTFKLLTNK (143 aa)) folds into the RNase H Ty1/copia-type domain.

The capsid protein forms a homotrimer, from which the VLPs are assembled. The protease is a homodimer, whose active site consists of two apposed aspartic acid residues. Post-translationally, initially, virus-like particles (VLPs) are composed of the structural unprocessed proteins Gag and Gag-Pol, and also contain the host initiator methionine tRNA (tRNA(i)-Met) which serves as a primer for minus-strand DNA synthesis, and a dimer of genomic Ty RNA. Processing of the polyproteins occurs within the particle and proceeds by an ordered pathway, called maturation. First, the protease (PR) is released by autocatalytic cleavage of the Gag-Pol polyprotein yielding capsid protein p45 and a Pol-p154 precursor protein. This cleavage is a prerequisite for subsequent processing of Pol-p154 at the remaining sites to release the mature structural and catalytic proteins. Maturation takes place prior to the RT reaction and is required to produce transposition-competent VLPs.

It is found in the cytoplasm. The protein resides in the nucleus. The enzyme catalyses DNA(n) + a 2'-deoxyribonucleoside 5'-triphosphate = DNA(n+1) + diphosphate. It carries out the reaction Endonucleolytic cleavage to 5'-phosphomonoester.. Its function is as follows. Capsid protein (CA) is the structural component of the virus-like particle (VLP), forming the shell that encapsulates the retrotransposons dimeric RNA genome. The particles are assembled from trimer-clustered units and there are holes in the capsid shells that allow for the diffusion of macromolecules. CA also has nucleocapsid-like chaperone activity, promoting primer tRNA(i)-Met annealing to the multipartite primer-binding site (PBS), dimerization of Ty1 RNA and initiation of reverse transcription. Functionally, the aspartyl protease (PR) mediates the proteolytic cleavages of the Gag and Gag-Pol polyproteins after assembly of the VLP. In terms of biological role, reverse transcriptase/ribonuclease H (RT) is a multifunctional enzyme that catalyzes the conversion of the retro-elements RNA genome into dsDNA within the VLP. The enzyme displays a DNA polymerase activity that can copy either DNA or RNA templates, and a ribonuclease H (RNase H) activity that cleaves the RNA strand of RNA-DNA heteroduplexes during plus-strand synthesis and hydrolyzes RNA primers. The conversion leads to a linear dsDNA copy of the retrotransposon that includes long terminal repeats (LTRs) at both ends. Integrase (IN) targets the VLP to the nucleus, where a subparticle preintegration complex (PIC) containing at least integrase and the newly synthesized dsDNA copy of the retrotransposon must transit the nuclear membrane. Once in the nucleus, integrase performs the integration of the dsDNA into the host genome. This Saccharomyces cerevisiae (strain ATCC 204508 / S288c) (Baker's yeast) protein is Transposon Ty1-OR Gag-Pol polyprotein (TY1B-OR).